An 870-amino-acid polypeptide reads, in one-letter code: DNA mismatch repair protein MutS (870 aa).

Residue 621-628 (GPNMAGKS) coordinates ATP. The disordered stretch occupies residues 813–834 (GAPRIAKSRRQRTPDPSPQFSL).

The protein belongs to the DNA mismatch repair MutS family.

Functionally, this protein is involved in the repair of mismatches in DNA. It is possible that it carries out the mismatch recognition step. This protein has a weak ATPase activity. In Pelobacter propionicus (strain DSM 2379 / NBRC 103807 / OttBd1), this protein is DNA mismatch repair protein MutS.